A 274-amino-acid polypeptide reads, in one-letter code: Large ribosomal subunit protein uL2 (274 aa).

The tract at residues 223 to 274 (VAMNPVDHPHGGGEGRTSGGRHPVSPWGMPTKGFKTRKNKSTDKYIVRRRNK) is disordered.

The protein belongs to the universal ribosomal protein uL2 family. In terms of assembly, part of the 50S ribosomal subunit. Forms a bridge to the 30S subunit in the 70S ribosome.

Functionally, one of the primary rRNA binding proteins. Required for association of the 30S and 50S subunits to form the 70S ribosome, for tRNA binding and peptide bond formation. It has been suggested to have peptidyltransferase activity; this is somewhat controversial. Makes several contacts with the 16S rRNA in the 70S ribosome. The protein is Large ribosomal subunit protein uL2 of Aliivibrio salmonicida (strain LFI1238) (Vibrio salmonicida (strain LFI1238)).